Consider the following 754-residue polypeptide: 17S U2 SnRNP complex component HTATSF1 (754 aa).

2 disordered regions span residues 1 to 53 and 81 to 122; these read MSGT…YEWD and GASS…KAES. Ser2 bears the N-acetylserine mark. The segment covering 90 to 122 has biased composition (basic and acidic residues); sequence EDVHARTAEEPPQEKAPEPTDPRKKGEKRKAES. 2 consecutive RRM domains span residues 133–218 and 264–349; these read TNVY…VAKF and RVVI…AWDG. The segment at 259–353 is U2AF homology motif (UHM); sequence RMRHERVVII…AQAWDGTTDY (95 aa). Position 297 is an N6-acetyllysine (Lys297). Residues 380–415 form a disordered region; the sequence is RGLRRSDSVSASERAGPSRARHFSEHPSTSKMNAQE. The interval 381–754 is mediates interaction with the P-TEFb complex; sequence GLRRSDSVSA…ILSSDDDDDI (374 aa). Phosphoserine occurs at positions 387, 403, 407, and 409. Over residues 405-415 the composition is skewed to polar residues; the sequence is HPSTSKMNAQE. Residues Lys429 and Lys430 each participate in a glycyl lysine isopeptide (Lys-Gly) (interchain with G-Cter in SUMO2) cross-link. Positions 433 to 754 are disordered; it reads KTEDGGEFEE…ILSSDDDDDI (322 aa). Phosphoserine occurs at positions 445, 452, and 453. Residues 462–476 show a composition bias toward basic and acidic residues; sequence CPGKESEEGCPKRGF. Phosphoserine is present on residues Ser481, Ser485, Ser494, Ser498, Ser521, and Ser529. The span at 508–538 shows a compositional bias: basic and acidic residues; sequence LRNDCEENGFAKESEDDPNKESEEEVGPTKE. Over residues 539 to 552 the composition is skewed to acidic residues; the sequence is SEEDDSEKESDEDC. The segment covering 553–563 has biased composition (basic and acidic residues); that stretch reads SEKQSEDGSER. Residues Ser557, Ser561, and Ser579 each carry the phosphoserine modification. Acidic residues predominate over residues 564-579; that stretch reads EFEENGLEKDLDEEGS. Over residues 580–590 the composition is skewed to basic and acidic residues; that stretch reads EKELHENVLDK. Positions 591–606 are enriched in acidic residues; the sequence is ELEENDSENSEFEDDG. 5 positions are modified to phosphoserine: Ser597, Ser600, Ser607, Ser616, and Ser624. Acidic residues-rich tracts occupy residues 613–633 and 640–651; these read EEGS…EEDT and DESNEKEDEEYA. The residue at position 633 (Thr633) is a Phosphothreonine. The residue at position 642 (Ser642) is a Phosphoserine. Residues 652–674 show a composition bias toward basic and acidic residues; it reads DEKGLEAADKKEEEGDADEKLFE. A compositionally biased stretch (acidic residues) spans 675–713; it reads ESDDKEDEDADGKEVEDADEKLFEDDDSNEKLFDEEEDS. Residues Ser676, Ser702, Ser713, Ser721, and Ser748 each carry the phosphoserine modification. Over residues 714 to 725 the composition is skewed to basic and acidic residues; the sequence is NEKLFDDSDERG.

Belongs to the HTATSF1 family. As to quaternary structure, component of the 17S U2 SnRNP complex, a ribonucleoprotein complex that contains small nuclear RNA (snRNA) U2 and a number of specific proteins. Within the 17S U2 SnRNP complex, interacts (via UHM region) directly with SF3B1. Component of a complex which is at least composed of HTATSF1/Tat-SF1, the P-TEFb complex components CDK9 and CCNT1, RNA polymerase II, SUPT5H, and NCL/nucleolin. Interacts with GTF2F2/RAP30 and POLR2A. Interacts with TCERG1/CA150. Interacts with (poly-ADP-ribosylated) RPA1; promoting HTATSF1 recruitment to DNA damage sites. Interacts (when phosphorylated) with TOPBP1; promoting recruitment of TOPBP1 to DNA damage sites during S-phase. Phosphorylation at Ser-748 by CK2 during S-phase in response to DNA damage promotes interaction with TOPBP1 and double-strand break (DSB) repair via homologous recombination.

Its subcellular location is the nucleus. It is found in the chromosome. Its function is as follows. Component of the 17S U2 SnRNP complex of the spliceosome, a large ribonucleoprotein complex that removes introns from transcribed pre-mRNAs. The 17S U2 SnRNP complex (1) directly participates in early spliceosome assembly and (2) mediates recognition of the intron branch site during pre-mRNA splicing by promoting the selection of the pre-mRNA branch-site adenosine, the nucleophile for the first step of splicing. Within the 17S U2 SnRNP complex, HTATSF1 is required to stabilize the branchpoint-interacting stem loop. HTATSF1 is displaced from the 17S U2 SnRNP complex before the stable addition of the 17S U2 SnRNP complex to the spliceosome, destabilizing the branchpoint-interacting stem loop and allowing to probe intron branch site sequences. Also acts as a regulator of transcriptional elongation, possibly by mediating the reciprocal stimulatory effect of splicing on transcriptional elongation. Involved in double-strand break (DSB) repair via homologous recombination in S-phase by promoting the recruitment of TOPBP1 to DNA damage sites. Mechanistically, HTATSF1 is (1) recruited to DNA damage sites in S-phase via interaction with poly-ADP-ribosylated RPA1 and (2) phosphorylated by CK2, promoting recruitment of TOPBP1, thereby facilitating RAD51 nucleofilaments formation and RPA displacement, followed by homologous recombination. This is 17S U2 SnRNP complex component HTATSF1 (HTATSF1) from Pongo abelii (Sumatran orangutan).